Consider the following 378-residue polypeptide: Squalene methyltransferase 1 (378 aa).

A helical transmembrane segment spans residues 17–37 (LLTWKGVAGLVVAITLGYLII).

The protein belongs to the class I-like SAM-binding methyltransferase superfamily. Erg6/SMT family.

The protein resides in the microsome membrane. The catalysed reaction is squalene + 2 S-adenosyl-L-methionine = 3,22-dimethyl-1,2,23,24-tetradehydro-2,3,22,23-tetrahydrosqualene + 2 S-adenosyl-L-homocysteine + 2 H(+). Converts squalene to mono- and dimethyl derivatives, but not to tri- and tetramethylated products. Unable to methylate cycloartenol, zymosterol or lanosterol. Methylates both C-3 and C22 positions, but only C-3 position in monomethylated products. Produces mainly dimethylated squalene. The chain is Squalene methyltransferase 1 (TMT-1) from Botryococcus braunii (Green alga).